A 597-amino-acid polypeptide reads, in one-letter code: Histidine protein kinase DivJ (597 aa).

Helical transmembrane passes span 40–57 (LGWLAAVCLAAAAALFTA), 62–81 (WPVWAALGAGALPALVSLIF), 91–109 (WLLVLWAVGGSLAAVLTGG), 110–125 (VGGAMAAWCLAPVAAA), 137–158 (GAALALIGACVAALTQLSGLAP), and 159–188 (AAPTGPLAFVLGFLALVTTGLGLAAGLLIG). A Histidine kinase domain is found at 335 to 553 (NMSHELRTPL…TVSVRLPVLL (219 aa)). Phosphohistidine; by autocatalysis is present on His-338. Over residues 561–585 (PTPPAAPEAPSAPEPAPTVEEPPPA) the composition is skewed to pro residues. Positions 561–597 (PTPPAAPEAPSAPEPAPTVEEPPPASLGDNVIAFAPR) are disordered.

The protein localises to the cell membrane. The catalysed reaction is ATP + protein L-histidine = ADP + protein N-phospho-L-histidine.. Kinase required for the regulation of cell division and differentiation. Is part of a signal transduction pathway, activating PleD by phosphorylation. The sequence is that of Histidine protein kinase DivJ (divJ) from Caulobacter vibrioides (strain ATCC 19089 / CIP 103742 / CB 15) (Caulobacter crescentus).